We begin with the raw amino-acid sequence, 70 residues long: Conotoxin Mr3.8 (70 aa).

Positions 1–24 (MLKMGVVLFIFLVLFPLATLQLDA) are cleaved as a signal peptide. Residues 25 to 54 (DQPVERYAKNKQLFNPHKRRGIILRAPGKR) constitute a propeptide that is removed on maturation. Disulfide bonds link cysteine 55–cysteine 67, cysteine 56–cysteine 68, and cysteine 61–cysteine 65.

The protein belongs to the conotoxin M superfamily. As to expression, expressed by the venom duct.

It is found in the secreted. Its function is as follows. In vitro, inhibits proliferation of the mice ovarian cancer cells ID8. The chain is Conotoxin Mr3.8 from Conus marmoreus (Marble cone).